Here is a 228-residue protein sequence, read N- to C-terminus: 2,3-bisphosphoglycerate-dependent phosphoglycerate mutase (228 aa).

Substrate contacts are provided by residues 8–15 (RHGQSEWN), 21–22 (TG), arginine 60, 87–90 (ERHY), lysine 98, 114–115 (RR), and 183–184 (GN). The active-site Tele-phosphohistidine intermediate is the histidine 9. The active-site Proton donor/acceptor is the glutamate 87.

This sequence belongs to the phosphoglycerate mutase family. BPG-dependent PGAM subfamily.

It carries out the reaction (2R)-2-phosphoglycerate = (2R)-3-phosphoglycerate. It functions in the pathway carbohydrate degradation; glycolysis; pyruvate from D-glyceraldehyde 3-phosphate: step 3/5. In terms of biological role, catalyzes the interconversion of 2-phosphoglycerate and 3-phosphoglycerate. The sequence is that of 2,3-bisphosphoglycerate-dependent phosphoglycerate mutase from Staphylococcus aureus (strain MRSA252).